Here is a 484-residue protein sequence, read N- to C-terminus: Dolichyl-P-Man:Man5GlcNAc2-PP-dolichol alpha-1,3-mannosyltransferase l(2)not2 (484 aa).

Residues 1 to 43 are Cytoplasmic-facing; sequence MAPPKAASHRPAVRRKKSGTLVDSILDKYLNVRFFKYLLLEPA. The chain crosses the membrane as a helical span at residues 44-64; the sequence is ALPIVGLFVLLAELVINVVVI. Residues 65–97 are Lumenal-facing; sequence QRVPYTEIDWVAYMQECEGFLNGTTNYSLLRGD. The helical transmembrane segment at 98–118 threads the bilayer; sequence TGPLVYPAAFVYIYSALYYVT. The Cytoplasmic segment spans residues 119 to 125; that stretch reads SHGTNVR. A helical transmembrane segment spans residues 126–146; the sequence is LAQYIFAGIYLLQLALVLRLY. At 147–171 the chain is on the lumenal side; it reads SKSRKVPPYVLVLSAFTSYRIHSIY. The chain crosses the membrane as a helical span at residues 172 to 192; the sequence is VLRLFNDPVAVLLLYAALNLF. The Cytoplasmic segment spans residues 193-211; sequence LDRRWTLGSTFFSLAVGVK. Residues 212–232 form a helical membrane-spanning segment; that stretch reads MNILLFAPALLLFYLANLGLL. A topological domain (lumenal) is located at residue Arg233. Residues 234 to 254 form a helical membrane-spanning segment; that stretch reads TILQLAVCGVIQLLLGAPFLL. Topologically, residues 255-294 are cytoplasmic; that stretch reads THPVEYLRGSFDLGRIFEHKWTVNYRFLSRDVFENRTFHV. Residues 295-315 traverse the membrane as a helical segment; it reads SLLGLHLLLLLAFAKPTWTFF. The Lumenal portion of the chain corresponds to 316–403; the sequence is QSYVRLRRIE…YGIHFDRCTQ (88 aa). Residues 404–424 form a helical membrane-spanning segment; it reads LALLPFFLCNLVGVACSRSLH. At 425 to 426 the chain is on the cytoplasmic side; sequence YQ. The chain crosses the membrane as a helical span at residues 427-447; sequence FYVWYFHSLPYLAWSTPYSLG. The Lumenal segment spans residues 448-484; it reads VRCLILGLIEYCWNTYPSTNFSSAALHFTHIIPPYQL.

It belongs to the glycosyltransferase ALG3 family.

Its subcellular location is the endoplasmic reticulum membrane. It carries out the reaction an alpha-D-Man-(1-&gt;2)-alpha-D-Man-(1-&gt;2)-alpha-D-Man-(1-&gt;3)-[alpha-D-Man-(1-&gt;6)]-beta-D-Man-(1-&gt;4)-beta-D-GlcNAc-(1-&gt;4)-alpha-D-GlcNAc-diphospho-di-trans,poly-cis-dolichol + a di-trans,poly-cis-dolichyl beta-D-mannosyl phosphate = an alpha-D-Man-(1-&gt;2)-alpha-D-Man-(1-&gt;2)-alpha-D-Man-(1-&gt;3)-[alpha-D-Man-(1-&gt;3)-alpha-D-Man-(1-&gt;6)]-beta-D-Man-(1-&gt;4)-beta-D-GlcNAc-(1-&gt;4)-alpha-D-GlcNAc-diphospho-di-trans,poly-cis-dolichol + a di-trans,poly-cis-dolichyl phosphate + H(+). Its pathway is protein modification; protein glycosylation. In terms of biological role, probable alpha-1,3-mannosyltransferase involved in the N-glycosylation pathway. Involved in glycosylation of the TNF receptor grnd, regulating its ligand affinity. Required for normal epithelial growth and architecture. Suppressor of JNK-dependent intestinal stem cell proliferation. In Drosophila melanogaster (Fruit fly), this protein is Dolichyl-P-Man:Man5GlcNAc2-PP-dolichol alpha-1,3-mannosyltransferase l(2)not2.